The following is a 459-amino-acid chain: Argininosuccinate lyase (459 aa).

Positions 440-459 (DEKKLEELRQNENRDNVYNP) are disordered.

Belongs to the lyase 1 family. Argininosuccinate lyase subfamily.

Its subcellular location is the cytoplasm. It catalyses the reaction 2-(N(omega)-L-arginino)succinate = fumarate + L-arginine. Its pathway is amino-acid biosynthesis; L-arginine biosynthesis; L-arginine from L-ornithine and carbamoyl phosphate: step 3/3. The sequence is that of Argininosuccinate lyase from Pyrococcus furiosus (strain ATCC 43587 / DSM 3638 / JCM 8422 / Vc1).